A 282-amino-acid polypeptide reads, in one-letter code: Aquaporin NIP1-1 (282 aa).

Transmembrane regions (helical) follow at residues 46–66 and 74–94; these read IIAEIFGTYFLMFAGCGAVTI and ITFPGVAIVWGLAVMVMVYAV. The short motif at 103–105 is the NPA 1 element; it reads NPA. Helical transmembrane passes span 125 to 145, 162 to 182, and 186 to 206; these read VLAQMLGATLASGTLRLMFGG, SLVIEIITTFYLMFVISGVAT, and AIGELAGLAVGATILLNVLIA. The NPA 2 signature appears at 215–217; sequence NPA. A helical membrane pass occupies residues 232-252; it reads IWVYVVGPVVGAVAGAWAYNL.

This sequence belongs to the MIP/aquaporin (TC 1.A.8) family. NIP (TC 1.A.8.12) subfamily.

It localises to the membrane. Its function is as follows. Aquaporins facilitate the transport of water and small neutral solutes across cell membranes. The sequence is that of Aquaporin NIP1-1 (NIP1-1) from Zea mays (Maize).